Here is a 504-residue protein sequence, read N- to C-terminus: Arabinose import ATP-binding protein AraG (504 aa).

2 ABC transporter domains span residues 8–243 and 256–499; these read LSFR…MVGR and YGEE…MPKV. An ATP-binding site is contributed by 40–47; the sequence is GENGAGKS.

The protein belongs to the ABC transporter superfamily. Arabinose importer (TC 3.A.1.2.2) family. As to quaternary structure, the complex is composed of two ATP-binding proteins (AraG), two transmembrane proteins (AraH) and a solute-binding protein (AraF).

The protein resides in the cell inner membrane. The catalysed reaction is L-arabinose(out) + ATP + H2O = L-arabinose(in) + ADP + phosphate + H(+). Functionally, part of the ABC transporter complex AraFGH involved in arabinose import. Responsible for energy coupling to the transport system. The protein is Arabinose import ATP-binding protein AraG of Escherichia coli O6:K15:H31 (strain 536 / UPEC).